The primary structure comprises 298 residues: Urease accessory protein UreD (298 aa).

This sequence belongs to the UreD family. As to quaternary structure, ureD, UreF and UreG form a complex that acts as a GTP-hydrolysis-dependent molecular chaperone, activating the urease apoprotein by helping to assemble the nickel containing metallocenter of UreC. The UreE protein probably delivers the nickel.

It localises to the cytoplasm. Its function is as follows. Required for maturation of urease via the functional incorporation of the urease nickel metallocenter. The sequence is that of Urease accessory protein UreD from Marinobacter nauticus (strain ATCC 700491 / DSM 11845 / VT8) (Marinobacter aquaeolei).